Here is a 330-residue protein sequence, read N- to C-terminus: GTPase Obg (330 aa).

The 159-residue stretch at 1–159 (MNFIDEVKIY…MWIHLSLKLL (159 aa)) folds into the Obg domain. The region spanning 160–327 (SDVGLVGLPN…IVKLALKIIK (168 aa)) is the OBG-type G domain. Residues 166-173 (GLPNAGKS), 191-195 (FTTLV), 212-215 (DIPG), 279-282 (NKCD), and 308-310 (STY) each bind GTP. Mg(2+)-binding residues include Ser173 and Thr193.

Belongs to the TRAFAC class OBG-HflX-like GTPase superfamily. OBG GTPase family. Monomer. It depends on Mg(2+) as a cofactor.

The protein localises to the cytoplasm. Its function is as follows. An essential GTPase which binds GTP, GDP and possibly (p)ppGpp with moderate affinity, with high nucleotide exchange rates and a fairly low GTP hydrolysis rate. Plays a role in control of the cell cycle, stress response, ribosome biogenesis and in those bacteria that undergo differentiation, in morphogenesis control. The chain is GTPase Obg from Rickettsia akari (strain Hartford).